Consider the following 507-residue polypeptide: Chromosomal replication initiator protein DnaA (507 aa).

A domain I, interacts with DnaA modulators region spans residues 1–112 (MTDDPGSGFT…PATDEADDTT (112 aa)). Residues 99–162 (RIAPPATDEA…ERPRNTDSAT (64 aa)) form a disordered region. Polar residues predominate over residues 113 to 127 (VPPSENPATTSPDTT). Residues 113–166 (VPPSENPATTSPDTTTDNDEIDDSAAARGDNQHSWPSYFTERPRNTDSATAGVT) form a domain II region. Positions 167–383 (SLNRRYTFDT…GALIRVTAFA (217 aa)) are domain III, AAA+ region. The ATP site is built by Gly-211, Gly-213, Lys-214, and Thr-215. The domain IV, binds dsDNA stretch occupies residues 384 to 507 (SLNKTPIDKA…TTRIRQRSKR (124 aa)).

It belongs to the DnaA family. In terms of assembly, oligomerizes as a right-handed, spiral filament on DNA at oriC.

The protein localises to the cytoplasm. Plays an essential role in the initiation and regulation of chromosomal replication. ATP-DnaA binds to the origin of replication (oriC) to initiate formation of the DNA replication initiation complex once per cell cycle. Binds the DnaA box (a 9 base pair repeat at the origin) and separates the double-stranded (ds)DNA. Forms a right-handed helical filament on oriC DNA; dsDNA binds to the exterior of the filament while single-stranded (ss)DNA is stabiized in the filament's interior. The ATP-DnaA-oriC complex binds and stabilizes one strand of the AT-rich DNA unwinding element (DUE), permitting loading of DNA polymerase. After initiation quickly degrades to an ADP-DnaA complex that is not apt for DNA replication. Binds acidic phospholipids. In Mycobacterium bovis (strain BCG / Tokyo 172 / ATCC 35737 / TMC 1019), this protein is Chromosomal replication initiator protein DnaA.